A 358-amino-acid polypeptide reads, in one-letter code: Putative purine permease 12 (358 aa).

10 helical membrane-spanning segments follow: residues W29–L49, W62–L82, L100–V120, S128–I148, I153–L173, L189–M209, V235–V255, L280–L299, I300–F316, and L320–Y340.

It belongs to the purine permeases (TC 2.A.7.14) family.

It localises to the membrane. The sequence is that of Putative purine permease 12 (PUP12) from Arabidopsis thaliana (Mouse-ear cress).